Consider the following 456-residue polypeptide: DEAD-box ATP-dependent RNA helicase 10 (456 aa).

A Q motif motif is present at residues 9 to 37 (KTFAELGVREELVKACERLGWKNPSKIQA). Residues 40 to 223 (LPFALEGKDV…RACLRNPVKI (184 aa)) enclose the Helicase ATP-binding domain. 53–60 (AQTGSGKT) contributes to the ATP binding site. The short motif at 171 to 174 (DEAD) is the DEAD box element. Residues 250–394 (YLVYILSEMP…EYPAEEDEVL (145 aa)) enclose the Helicase C-terminal domain. The segment at 407-456 (SAMNMKESGGRKRRGEDDEESERFLGGNKDRGNKERGGNKDKKSSKKFKR) is disordered. The span at 434–448 (NKDRGNKERGGNKDK) shows a compositional bias: basic and acidic residues.

This sequence belongs to the DEAD box helicase family. DDX47/RRP3 subfamily. Expressed in all tissues and organs examined including root, cotyledon, first and second leaves, third and fourth leaves, fifth and sixth leaves, shoot apex, flower, flower bud, cauline leaf and rosette leaves.

It is found in the nucleus. The protein localises to the nucleolus. It carries out the reaction ATP + H2O = ADP + phosphate + H(+). In terms of biological role, involved in leaf polarity establishment by functioning cooperatively with AS2 to repress abaxial genes ARF3, ARF4, KAN1, KAN2, YAB1 and YAB5, and the knox homeobox genes KNAT1, KNAT2, KNAT6, and STM to promote adaxial development in leaf primordia at shoot apical meristems at high temperatures. Involved in the processing of pre-rRNA intermediates at high temperatures. In Arabidopsis thaliana (Mouse-ear cress), this protein is DEAD-box ATP-dependent RNA helicase 10 (RH10).